The chain runs to 357 residues: MIETDKLAAKAVSAERIISASPASPNEEAFERALRPKLLDEYVGQEKVRGQLDIFMTAAKNRSEALDHVLLFGPPGLGKTTLAHIIAREMGVNLRQTSGPVLERPGDLAALLTNLEANDVLFIDEIHRLSPVVEEILYPALEDYQIDIMIGEGPAARSVKLDLQPFTLVGATTRAGMLTNPLRDRFGIVARLEFYTPAELAKIVTRSSGLLNAHIVDEGALEIAKRSRGTPRIANRLLRRVRDFAEVKADGIITREVADAALAMLDVDAVGFDLMDRKLLEAILHKFNGGPVGIDNLAAAIGEERDTIEDVLEPYLIQQGYLQRTPRGRVATASAYQHFGLGAPKSGPVRDLWDDNQ.

Residues 4-195 (TDKLAAKAVS…FGIVARLEFY (192 aa)) are large ATPase domain (RuvB-L). ATP-binding positions include leucine 34, arginine 35, glycine 76, lysine 79, threonine 80, threonine 81, 142-144 (EDY), arginine 185, tyrosine 195, and arginine 232. Mg(2+) is bound at residue threonine 80. Positions 196–266 (TPAELAKIVT…VADAALAMLD (71 aa)) are small ATPAse domain (RuvB-S). Positions 269–357 (AVGFDLMDRK…PVRDLWDDNQ (89 aa)) are head domain (RuvB-H). DNA contacts are provided by arginine 305, arginine 324, and arginine 329.

It belongs to the RuvB family. As to quaternary structure, homohexamer. Forms an RuvA(8)-RuvB(12)-Holliday junction (HJ) complex. HJ DNA is sandwiched between 2 RuvA tetramers; dsDNA enters through RuvA and exits via RuvB. An RuvB hexamer assembles on each DNA strand where it exits the tetramer. Each RuvB hexamer is contacted by two RuvA subunits (via domain III) on 2 adjacent RuvB subunits; this complex drives branch migration. In the full resolvosome a probable DNA-RuvA(4)-RuvB(12)-RuvC(2) complex forms which resolves the HJ.

It localises to the cytoplasm. It catalyses the reaction ATP + H2O = ADP + phosphate + H(+). In terms of biological role, the RuvA-RuvB-RuvC complex processes Holliday junction (HJ) DNA during genetic recombination and DNA repair, while the RuvA-RuvB complex plays an important role in the rescue of blocked DNA replication forks via replication fork reversal (RFR). RuvA specifically binds to HJ cruciform DNA, conferring on it an open structure. The RuvB hexamer acts as an ATP-dependent pump, pulling dsDNA into and through the RuvAB complex. RuvB forms 2 homohexamers on either side of HJ DNA bound by 1 or 2 RuvA tetramers; 4 subunits per hexamer contact DNA at a time. Coordinated motions by a converter formed by DNA-disengaged RuvB subunits stimulates ATP hydrolysis and nucleotide exchange. Immobilization of the converter enables RuvB to convert the ATP-contained energy into a lever motion, pulling 2 nucleotides of DNA out of the RuvA tetramer per ATP hydrolyzed, thus driving DNA branch migration. The RuvB motors rotate together with the DNA substrate, which together with the progressing nucleotide cycle form the mechanistic basis for DNA recombination by continuous HJ branch migration. Branch migration allows RuvC to scan DNA until it finds its consensus sequence, where it cleaves and resolves cruciform DNA. In Ralstonia pickettii (strain 12J), this protein is Holliday junction branch migration complex subunit RuvB.